Reading from the N-terminus, the 1159-residue chain is Protocadherin-17 (1159 aa).

The first 17 residues, 1-17 (MYLSICCCFLLWAPALT), serve as a signal peptide directing secretion. 6 Cadherin domains span residues 18–132 (LKNL…APSF), 133–243 (SSDQ…SPVF), 244–351 (EAPS…APSI), 353–472 (FVSV…PPRF), 473–583 (TKGL…APVI), and 589–695 (QNDT…VPRV). The Extracellular segment spans residues 18–707 (LKNLNYSVPE…EQHHWDMSLP (690 aa)). N-linked (GlcNAc...) asparagine glycosylation is present at Asn22. The Cell attachment site signature appears at 186 to 188 (RGD). 6 N-linked (GlcNAc...) asparagine glycosylation sites follow: Asn266, Asn439, Asn453, Asn504, Asn566, and Asn590. A helical transmembrane segment spans residues 708-728 (LIVTLSTISIILLAAMITIAV). At 729 to 1159 (KCKRENKEIR…RGNDPVAVRK (431 aa)) the chain is on the cytoplasmic side. Disordered stretches follow at residues 858-909 (NFPA…KGSC) and 1108-1132 (SRDS…GRES). Positions 867–879 (GSRQQFVQSSSTF) are enriched in polar residues. Composition is skewed to basic and acidic residues over residues 880-895 (KDPE…HGDS) and 1120-1132 (QLDH…GRES).

It is found in the cell membrane. In terms of biological role, potential calcium-dependent cell-adhesion protein. This is Protocadherin-17 (PCDH17) from Homo sapiens (Human).